A 296-amino-acid polypeptide reads, in one-letter code: Ribose import binding protein RbsB (296 aa).

The first 25 residues, 1-25 (MNMKKLATLVSAVALSATVSANAMA), serve as a signal peptide directing secretion.

The protein belongs to the bacterial solute-binding protein 2 family. In terms of assembly, the complex is composed of an ATP-binding protein (RbsA), two transmembrane proteins (RbsC) and a solute-binding protein (RbsB).

Its subcellular location is the periplasm. Part of the ABC transporter complex RbsABC involved in ribose import. Binds ribose. The sequence is that of Ribose import binding protein RbsB (rbsB) from Salmonella typhi.